The chain runs to 238 residues: Complement C1q-like protein 4 (238 aa).

The first 15 residues, methionine 1–serine 15, serve as a signal peptide directing secretion. The tract at residues glycine 36 to alanine 101 is disordered. The region spanning proline 53 to glycine 96 is the Collagen-like domain. The span at proline 71–glycine 96 shows a compositional bias: pro residues. Residues glycine 105–aspartate 238 form the C1q domain.

In terms of assembly, forms homooligomers, predominantly dimers or trimers. Forms heterooligomers with C1QL1, C1QL2 and C1QL3, when proteins are coexpressed; this interaction does not occur after secretion. Interacts with ADGRB3. Highest expression levels in testis and adipose tissue, lower levels in skeletal muscle and kidney.

The protein localises to the secreted. In terms of biological role, may regulate the number of excitatory synapses that are formed on hippocampus neurons. Has no effect on inhibitory synapses. May inhibit adipocyte differentiation at an early stage of the process. In Homo sapiens (Human), this protein is Complement C1q-like protein 4 (C1QL4).